Reading from the N-terminus, the 416-residue chain is Na(+)/H(+) antiporter NhaA (416 aa).

9 helical membrane-spanning segments follow: residues 18–38 (VGGAILLVAAAIALLWVNSPW), 59–79 (LTLADWTKDGLLAVFFFVAGL), 97–117 (ALPIIAAVGGVVTPALIAAVI), 127–147 (GWAIPVATDIAFALGVLALTG), 167–187 (LLAIILIAVLFTVGVSLLWLL), 265–285 (GICVPLFALFAAGVPLNATVF), 297–317 (VMLGLLLGKTIGIFGISWVAI), 333–353 (MFALSVLGAIGFTVSLLVAEL), and 363–383 (LAKAAVLITSLAASLAGSALL). A disordered region spans residues 396–416 (ALELQPDEGDASDPSEGGSLR).

Belongs to the NhaA Na(+)/H(+) (TC 2.A.33) antiporter family.

It localises to the cell membrane. The enzyme catalyses Na(+)(in) + 2 H(+)(out) = Na(+)(out) + 2 H(+)(in). Functionally, na(+)/H(+) antiporter that extrudes sodium in exchange for external protons. The polypeptide is Na(+)/H(+) antiporter NhaA (Nocardia farcinica (strain IFM 10152)).